The following is a 365-amino-acid chain: Chorismate synthase (365 aa).

R46 is an NADP(+) binding site. FMN-binding positions include 123–125 (RSS), 241–242 (NG), G281, 296–300 (KPTPS), and R322.

It belongs to the chorismate synthase family. In terms of assembly, homotetramer. It depends on FMNH2 as a cofactor.

It catalyses the reaction 5-O-(1-carboxyvinyl)-3-phosphoshikimate = chorismate + phosphate. It participates in metabolic intermediate biosynthesis; chorismate biosynthesis; chorismate from D-erythrose 4-phosphate and phosphoenolpyruvate: step 7/7. In terms of biological role, catalyzes the anti-1,4-elimination of the C-3 phosphate and the C-6 proR hydrogen from 5-enolpyruvylshikimate-3-phosphate (EPSP) to yield chorismate, which is the branch point compound that serves as the starting substrate for the three terminal pathways of aromatic amino acid biosynthesis. This reaction introduces a second double bond into the aromatic ring system. This is Chorismate synthase from Helicobacter pylori (strain HPAG1).